The primary structure comprises 418 residues: Putative F-box protein At3g23950 (418 aa).

An F-box domain is found at M1–C42.

The protein is Putative F-box protein At3g23950 of Arabidopsis thaliana (Mouse-ear cress).